A 384-amino-acid polypeptide reads, in one-letter code: Signal peptide peptidase-like 3 (384 aa).

Topologically, residues 1–8 are lumenal; sequence MAEQTYSW. A helical transmembrane segment spans residues 9–29; the sequence is AYSLVDSSQVSTFLISILLIV. Over 30–73 the chain is Cytoplasmic; sequence YGSFRSLNMDFENQDKEKDSNSSSGSFNGNSTNNSIQTIDSTQA. A helical membrane pass occupies residues 74–94; it reads LFLPIGASVSLLVMFFFFDSV. Gln-95 is a topological domain (lumenal). The helical transmembrane segment at 96–116 threads the bilayer; the sequence is VVFTICTAVLATIAFAFLLLP. Residues 117–138 lie on the Cytoplasmic side of the membrane; it reads MCQYLTRPCSPQNKISFGCCGR. Residues 139-159 form a helical membrane-spanning segment; the sequence is FTAAELLSFSLSVMLVLIWVL. The Lumenal portion of the chain corresponds to 160-164; it reads TGHWL. A helical transmembrane segment spans residues 165–185; it reads LMDALAMGLCVAMIAFVRLPS. The Cytoplasmic segment spans residues 186–190; it reads LKVSC. Residues 191–211 traverse the membrane as a helical segment; it reads LLLSGLLIYDVFWVFFSAYIF. The active site involves Asp-200. Residues 212–262 lie on the Lumenal side of the membrane; the sequence is NSNVMVKVATQPADNPLDVLSRKLHLGPNVGRDVPRLSLPGKLVFPSSTGS. The chain crosses the membrane as a helical span at residues 263 to 283; sequence HFSMLGIGDIVMPGLLLCFVL. Residue Asp-271 is part of the active site. Residues 284–311 lie on the Cytoplasmic side of the membrane; sequence RYDNYKKQASGDSCGAPGPANISGRMQK. The chain crosses the membrane as a helical span at residues 312 to 332; that stretch reads VSYFHCTLIGYFVGLLTATVA. At 333 to 339 the chain is on the lumenal side; that stretch reads SRIHRAA. Residues 340 to 360 traverse the membrane as a helical segment; the sequence is QPALLYLVPFTLLPLLTMAYL. Residues 341–343 carry the PAL motif; it reads PAL. At 361 to 384 the chain is on the cytoplasmic side; it reads KGDLRRMWSEPFHSKSSSSRFLEV.

This sequence belongs to the peptidase A22B family. As to quaternary structure, monomer. Homodimer. Interacts with STIM1 (via transmembrane region and SOAR/CAD domain); the interaction promotes the binding of STIM1 to ORAI1. In terms of processing, not glycosylated.

It localises to the endoplasmic reticulum membrane. The protein resides in the golgi apparatus. It is found in the membrane. With respect to regulation, its proteolytic activity is blocked by a signal peptide peptidase (SPP) inhibitor, (ZLL)2-ketone (ZLL) or a gamma-secretase inhibitor, LY411,575. In terms of biological role, intramembrane-cleaving aspartic protease (I-CLiP) that cleaves type II membrane protein substrates in or close to their luminal transmembrane domain boundaries. Acts like a sheddase by mediating the proteolytic release and secretion of active site-containing ectodomains of glycan-modifiying glycosidase and glycosyltransferase enzymes such as MGAT5, B4GAT1 and B4GALT1. Plays a role in the regulation of cellular glycosylation processes. Required to link T-cell antigen receptor (TCR) and calcineurin-NFAT signaling cascades in lymphocytes by promoting the association of STIM1 and ORAI1 during store-operated calcium entry (SOCE) in a protease-independent manner. The polypeptide is Signal peptide peptidase-like 3 (Mus musculus (Mouse)).